The sequence spans 184 residues: uncharacterized protein (184 aa).

Residues 1–20 (MKKQILALVCGVIFSSSTWA) form the signal peptide.

This sequence to E.coli YtfJ.

The protein resides in the periplasm. This is an uncharacterized protein from Haemophilus influenzae (strain ATCC 51907 / DSM 11121 / KW20 / Rd).